The primary structure comprises 430 residues: 3-phosphoshikimate 1-carboxyvinyltransferase (430 aa).

Positions 25, 26, and 30 each coordinate 3-phosphoshikimate. Lys-25 is a binding site for phosphoenolpyruvate. Positions 97 and 125 each coordinate phosphoenolpyruvate. The 3-phosphoshikimate site is built by Ser-170, Gln-172, Asp-318, and Lys-345. A phosphoenolpyruvate-binding site is contributed by Gln-172. The Proton acceptor role is filled by Asp-318. Residues Arg-349 and Arg-391 each coordinate phosphoenolpyruvate.

This sequence belongs to the EPSP synthase family. Monomer.

The protein localises to the cytoplasm. The catalysed reaction is 3-phosphoshikimate + phosphoenolpyruvate = 5-O-(1-carboxyvinyl)-3-phosphoshikimate + phosphate. It functions in the pathway metabolic intermediate biosynthesis; chorismate biosynthesis; chorismate from D-erythrose 4-phosphate and phosphoenolpyruvate: step 6/7. Catalyzes the transfer of the enolpyruvyl moiety of phosphoenolpyruvate (PEP) to the 5-hydroxyl of shikimate-3-phosphate (S3P) to produce enolpyruvyl shikimate-3-phosphate and inorganic phosphate. In Shouchella clausii (strain KSM-K16) (Alkalihalobacillus clausii), this protein is 3-phosphoshikimate 1-carboxyvinyltransferase.